The primary structure comprises 622 residues: MALLQISEPGQSPHPHQRRIAVGIDLGTTHSLVAAVRNGVSECLPDAQGRVLLPSVVRYLDQGGRQIGHEAVAAQVWDARNTIASVKRFMGRSLKDVARAGQLPYDFVPDAAAQGMLSLATVAGNKSPVEVSAEILAALRQRAEDSFNADLYGAVITVPAYFDDAQRQATKDAARLAGIPLLRLINEPTAAAIAYGLDNASEGIYAVYDLGGGTFDISILRLAQGVFEVIATGGDSALGGDDYDAALVDWVLQQARRQASTPADRAALRIAARACKQALSATDIAAFSADISCANVHVDVRRADFEAITADLTARSMAAVRRALRDAQLTRDQVQGVVLVGGATRMPQVQRAVAQFFGQPPLTNLNPDEVVALGAAIQAHQLAGNGGNAAELLLLDVIPLSLGVETMGGLVERIVARNEPIPTAKAQDFTTYKDGQTALAIHVVQGERDLVQDCRSLARFELRGIPPMVAGAARIRVTFAIDADGLLSVSAKEQGSGAQAHIDVKPSYGLSDEQIARMLQDSFATAAQDMKTRALVEARVDAERMLSATQSALAADGEMLSARERAAIEALMATLSAQREADDAAVIEAATEALAQGTQAFAARRMNRGIRQALAGRNVQTL.

Belongs to the heat shock protein 70 family.

Chaperone involved in the maturation of iron-sulfur cluster-containing proteins. Has a low intrinsic ATPase activity which is markedly stimulated by HscB. The chain is Chaperone protein HscA homolog from Verminephrobacter eiseniae (strain EF01-2).